The primary structure comprises 459 residues: Bifunctional protein GlmU (459 aa).

The tract at residues 1–230 is pyrophosphorylase; the sequence is MTTRNTIILA…FDESMGVNDR (230 aa). UDP-N-acetyl-alpha-D-glucosamine is bound by residues 9–12, lysine 23, glutamine 73, 78–79, 101–103, glycine 140, glutamate 155, asparagine 170, and asparagine 228; these read LAAG, GT, and SGD. Position 103 (aspartate 103) interacts with Mg(2+). Asparagine 228 is a Mg(2+) binding site. A linker region spans residues 231 to 251; sequence VALSAATKIMRDRINEAHMRD. The interval 252–459 is N-acetyltransferase; sequence GVTLIDPATT…YQKLPYRGED (208 aa). The UDP-N-acetyl-alpha-D-glucosamine site is built by arginine 333 and lysine 351. The Proton acceptor role is filled by histidine 363. UDP-N-acetyl-alpha-D-glucosamine-binding residues include tyrosine 366 and asparagine 377. Residues 386–387, serine 405, alanine 423, and arginine 440 contribute to the acetyl-CoA site; that span reads NY.

In the N-terminal section; belongs to the N-acetylglucosamine-1-phosphate uridyltransferase family. It in the C-terminal section; belongs to the transferase hexapeptide repeat family. As to quaternary structure, homotrimer. The cofactor is Mg(2+).

The protein localises to the cytoplasm. It catalyses the reaction alpha-D-glucosamine 1-phosphate + acetyl-CoA = N-acetyl-alpha-D-glucosamine 1-phosphate + CoA + H(+). The catalysed reaction is N-acetyl-alpha-D-glucosamine 1-phosphate + UTP + H(+) = UDP-N-acetyl-alpha-D-glucosamine + diphosphate. It participates in nucleotide-sugar biosynthesis; UDP-N-acetyl-alpha-D-glucosamine biosynthesis; N-acetyl-alpha-D-glucosamine 1-phosphate from alpha-D-glucosamine 6-phosphate (route II): step 2/2. It functions in the pathway nucleotide-sugar biosynthesis; UDP-N-acetyl-alpha-D-glucosamine biosynthesis; UDP-N-acetyl-alpha-D-glucosamine from N-acetyl-alpha-D-glucosamine 1-phosphate: step 1/1. The protein operates within bacterial outer membrane biogenesis; LPS lipid A biosynthesis. Its function is as follows. Catalyzes the last two sequential reactions in the de novo biosynthetic pathway for UDP-N-acetylglucosamine (UDP-GlcNAc). The C-terminal domain catalyzes the transfer of acetyl group from acetyl coenzyme A to glucosamine-1-phosphate (GlcN-1-P) to produce N-acetylglucosamine-1-phosphate (GlcNAc-1-P), which is converted into UDP-GlcNAc by the transfer of uridine 5-monophosphate (from uridine 5-triphosphate), a reaction catalyzed by the N-terminal domain. This Levilactobacillus brevis (strain ATCC 367 / BCRC 12310 / CIP 105137 / JCM 1170 / LMG 11437 / NCIMB 947 / NCTC 947) (Lactobacillus brevis) protein is Bifunctional protein GlmU.